Here is a 52-residue protein sequence, read N- to C-terminus: Insulin (52 aa).

Cystine bridges form between C7–C38, C19–C51, and C37–C42.

This sequence belongs to the insulin family. In terms of assembly, heterodimer of a B chain and an A chain linked by two disulfide bonds.

It is found in the secreted. Its function is as follows. Insulin decreases blood glucose concentration. It increases cell permeability to monosaccharides, amino acids and fatty acids. It accelerates glycolysis, the pentose phosphate cycle, and glycogen synthesis in liver. The polypeptide is Insulin (ins) (Polypterus senegalus (Senegal bichir)).